Reading from the N-terminus, the 100-residue chain is Urease subunit gamma (100 aa).

This sequence belongs to the urease gamma subunit family. In terms of assembly, heterotrimer of UreA (gamma), UreB (beta) and UreC (alpha) subunits. Three heterotrimers associate to form the active enzyme.

The protein resides in the cytoplasm. The enzyme catalyses urea + 2 H2O + H(+) = hydrogencarbonate + 2 NH4(+). It functions in the pathway nitrogen metabolism; urea degradation; CO(2) and NH(3) from urea (urease route): step 1/1. This Azoarcus sp. (strain BH72) protein is Urease subunit gamma.